Here is a 319-residue protein sequence, read N- to C-terminus: Acetyl-coenzyme A carboxylase carboxyl transferase subunit alpha (319 aa).

The 262-residue stretch at 35 to 296 (NIDEEVHRLR…KTQLLADLAD (262 aa)) folds into the CoA carboxyltransferase C-terminal domain.

It belongs to the AccA family. As to quaternary structure, acetyl-CoA carboxylase is a heterohexamer composed of biotin carboxyl carrier protein (AccB), biotin carboxylase (AccC) and two subunits each of ACCase subunit alpha (AccA) and ACCase subunit beta (AccD).

It localises to the cytoplasm. The enzyme catalyses N(6)-carboxybiotinyl-L-lysyl-[protein] + acetyl-CoA = N(6)-biotinyl-L-lysyl-[protein] + malonyl-CoA. Its pathway is lipid metabolism; malonyl-CoA biosynthesis; malonyl-CoA from acetyl-CoA: step 1/1. Functionally, component of the acetyl coenzyme A carboxylase (ACC) complex. First, biotin carboxylase catalyzes the carboxylation of biotin on its carrier protein (BCCP) and then the CO(2) group is transferred by the carboxyltransferase to acetyl-CoA to form malonyl-CoA. This Cronobacter sakazakii (strain ATCC BAA-894) (Enterobacter sakazakii) protein is Acetyl-coenzyme A carboxylase carboxyl transferase subunit alpha.